The following is a 297-amino-acid chain: CASP-like protein 4A2 (297 aa).

A compositionally biased stretch (polar residues) spans 1 to 20 (MKMKRTASSNSEAQSYNESP). Residues 1 to 135 (MKMKRTASSN…PINGEESTRT (135 aa)) form a disordered region. The Cytoplasmic segment spans residues 1 to 149 (MKMKRTASSN…ARGDDLVSLT (149 aa)). Pro residues predominate over residues 69-83 (LPSPIPPPPPQFPPP). Residues 150–170 (ALGFRITEVILCVISFSIMAA) form a helical membrane-spanning segment. At 171 to 191 (DKTQGWSGDSYDRYKEYRYCL) the chain is on the extracellular side. The chain crosses the membrane as a helical span at residues 192 to 212 (AVNVIAFVYSAFEACDAACYI). Topologically, residues 213–225 (AKESYMINCGFHD) are cytoplasmic. Residues 226–246 (LFVFSMDQLLAYLLMSASSCA) form a helical membrane-spanning segment. Over 247–265 (ATRVDDWVSNWGKDEFTQM) the chain is Extracellular. The chain crosses the membrane as a helical span at residues 266–286 (ATASIAVSFLAFGAFAVSALI). At 287–297 (SSYRLFTHASS) the chain is on the cytoplasmic side.

This sequence belongs to the Casparian strip membrane proteins (CASP) family. In terms of assembly, homodimer and heterodimers.

It localises to the cell membrane. This Arabidopsis thaliana (Mouse-ear cress) protein is CASP-like protein 4A2.